A 105-amino-acid polypeptide reads, in one-letter code: Small ribosomal subunit protein uS10 (105 aa).

The protein belongs to the universal ribosomal protein uS10 family. As to quaternary structure, part of the 30S ribosomal subunit.

Involved in the binding of tRNA to the ribosomes. This Lawsonia intracellularis (strain PHE/MN1-00) protein is Small ribosomal subunit protein uS10.